Here is a 365-residue protein sequence, read N- to C-terminus: MAIMAPRTLLLLLSGALALTQTWAGSHSMRYFSTSVSRPGRGEPRFIAVGYVDDTQFVRFDSDAASQRMEPRTPWMEQEGPEYWDRETRSVKAHAQTNRVDLGTLRGYYNQSDGGSHTIQRMFGCDVGPDGRFLRGYEQHAYDGKDYIALNEDLRSWTAADMAAQITQRKWEAAGAAEQDRAYLEGLCVESLRRYLENGKETLQRTDAPKTHMTHHPVSDHEATLRCWALGFYPAEITLTWQRDGEDQTQDTELVETRPAGDGTFQKWAAVVVPSGKEQRYTCHVQHEGLPEPLTLRWELSSQPTIPIVGIIAGLVLLGAVITGAVVAAVMWRRRNSDRKGGSYSQAASNDSAQGSDVSLTACKV.

The N-terminal stretch at 1–24 (MAIMAPRTLLLLLSGALALTQTWA) is a signal peptide. The segment at 25–114 (GSHSMRYFST…LRGYYNQSDG (90 aa)) is alpha-1. Residues 25–308 (GSHSMRYFST…ELSSQPTIPI (284 aa)) are Extracellular-facing. N-linked (GlcNAc...) asparagine glycosylation is present at asparagine 110. The segment at 115 to 206 (GSHTIQRMFG…ENGKETLQRT (92 aa)) is alpha-2. 2 cysteine pairs are disulfide-bonded: cysteine 125/cysteine 188 and cysteine 227/cysteine 283. Positions 207-298 (DAPKTHMTHH…GLPEPLTLRW (92 aa)) are alpha-3. Residues 209 to 297 (PKTHMTHHPV…EGLPEPLTLR (89 aa)) enclose the Ig-like C1-type domain. The segment at 299 to 308 (ELSSQPTIPI) is connecting peptide. The helical transmembrane segment at 309–332 (VGIIAGLVLLGAVITGAVVAAVMW) threads the bilayer. Residues 333–365 (RRRNSDRKGGSYSQAASNDSAQGSDVSLTACKV) are Cytoplasmic-facing. The interval 340 to 365 (KGGSYSQAASNDSAQGSDVSLTACKV) is disordered. Serine 343 carries the post-translational modification Phosphoserine. Polar residues predominate over residues 343 to 359 (SYSQAASNDSAQGSDVS). A Phosphotyrosine modification is found at tyrosine 344. Serine 345, serine 349, serine 352, serine 356, and serine 359 each carry phosphoserine.

This sequence belongs to the MHC class I family. As to quaternary structure, heterodimer of an alpha chain and a beta chain (beta-2-microglobulin).

The protein resides in the membrane. Involved in the presentation of foreign antigens to the immune system. The polypeptide is Popy Class I histocompatibility antigen, A-1 alpha chain (Pongo pygmaeus (Bornean orangutan)).